A 368-amino-acid polypeptide reads, in one-letter code: RING finger protein 32 (368 aa).

Positions 45-82 are disordered; sequence RKKEKKSKSLKRDATAIIDTGLRKSTEGPNMEDPEKEY. Residues 129–171 form an RING-type 1; atypical zinc finger; the sequence is CPICKEEFELHPQVLLSCSHVFHRACLQAFEKFTNKKTCPLCR. In terms of domain architecture, IQ spans 188 to 217; the sequence is RVKCATRIQAYWRGYIVRKWYRNLRKIIPP. The RING-type 2; atypical zinc-finger motif lies at 295–358; the sequence is CSICLTPLSF…APFHVCPLCR (64 aa).

It localises to the cytoplasm. Functionally, may play a role in sperm formation. The chain is RING finger protein 32 (Rnf32) from Mus musculus (Mouse).